The sequence spans 809 residues: F-BAR domain only protein 2 (809 aa).

The F-BAR domain maps to 3 to 250 (MAHFVENFWG…NMANTTIESL (248 aa)). Residues 3 to 274 (MAHFVENFWG…PGLIEFEECD (272 aa)) form a mediates dimerization and binding to membranes enriched in Pi(4,5)-P2 and induces their tubulation region. A coiled-coil region spans residues 87–156 (HLDLVRKLQE…CVEQERLKKE (70 aa)). Residue K297 forms a Glycyl lysine isopeptide (Lys-Gly) (interchain with G-Cter in SUMO2) linkage. The disordered stretch occupies residues 301 to 352 (DAESVECPDADSLNIPDVDEEGFSIKPEANQNDTKENHFYSSSDSDSEDEEP). S312 carries the phosphoserine modification. T385 is modified (phosphothreonine). Residues S387, S394, S402, and S403 each carry the phosphoserine modification. Residues 390 to 416 (VSRHSPVQMNRNSSNEELTKSKPSSLP) are compositionally biased toward polar residues. 2 disordered regions span residues 390 to 422 (VSRHSPVQMNRNSSNEELTKSKPSSLPTEKGTN) and 435 to 536 (LESS…PVSL). Positions 435 to 456 (LESSSAPLTSSSSARPTTPLSL) are enriched in low complexity. 7 positions are modified to phosphoserine: S487, S492, S495, S507, S509, S510, and S532. A compositionally biased stretch (low complexity) spans 501 to 520 (PLARAESSSSISSSASLSAA). The interval 520 to 809 (ANTPTVGVSR…FATGRYLADC (290 aa)) is mediates interaction with DAB2, EPS15, EPS15R and ITSN1. The region spanning 541 to 808 (TLPVAIALTE…RFATGRYLAD (268 aa)) is the MHD domain.

It belongs to the FCHO family. Homodimer; disulfide-linked. May form homotetramer. Interacts with AP2A1. Interacts with EPS15, EPS15R, ITSN1 and ITSN2; recruit those scaffolding proteins which in turn may interact with the adaptor protein complex AP-2 at the plasma membrane. Interacts with DAB2 (via DPF motifs); mediates LDL receptor/LDLR endocytosis. In terms of processing, ubiquitinated. Mainly undergoes monoubiquitination but also polyubiquitination. Ubiquitously expressed (at protein level).

The protein localises to the membrane. It localises to the clathrin-coated pit. In terms of biological role, functions in an early step of clathrin-mediated endocytosis. Has both a membrane binding/bending activity and the ability to recruit proteins essential to the formation of functional clathrin-coated pits. Has a lipid-binding activity with a preference for membranes enriched in phosphatidylserine and phosphoinositides (Pi(4,5) biphosphate) like the plasma membrane. Its membrane-bending activity might be important for the subsequent action of clathrin and adaptors in the formation of clathrin-coated vesicles. Involved in adaptor protein complex AP-2-dependent endocytosis of the transferrin receptor, it also functions in the AP-2-independent endocytosis of the LDL receptor. The protein is F-BAR domain only protein 2 (Fcho2) of Mus musculus (Mouse).